The primary structure comprises 111 residues: Elevenin (111 aa).

An N-terminal signal peptide occupies residues 1 to 24 (MAPSQKALLVLVLSMLLTASDSRA). An intrachain disulfide couples C29 to C38. Positions 44–111 (KRGGDSLSVG…TEQLDRLLTL (68 aa)) are excised as a propeptide.

It belongs to the elevenin family. As to quaternary structure, monomer. As to expression, expressed by the venom duct.

The protein localises to the secreted. Functionally, may mimic the function of prey elevenin neuropeptide. In vivo, intracranial injection in mice induces hyperactivity. The protein is Elevenin of Conus ebraeus (Hebrew cone).